We begin with the raw amino-acid sequence, 135 residues long: Evasin P1134 (135 aa).

An N-terminal signal peptide occupies residues 1-31; that stretch reads MEVKTFAFLQIAVFIALGIQIFAAVTAAADA. 3 cysteine pairs are disulfide-bonded: C41-C63, C45-C65, and C56-C76. An N-linked (GlcNAc...) asparagine glycan is attached at N44. The disordered stretch occupies residues 88–112; that stretch reads ETPSNSDLEAATPRPRKTLYPVRNP.

The protein localises to the secreted. Its function is as follows. Salivary chemokine-binding protein which binds to host chemokine CXCL1. This chain is Evasin P1134, found in Ixodes ricinus (Common tick).